Here is a 936-residue protein sequence, read N- to C-terminus: Isoleucine--tRNA ligase (936 aa).

The 'HIGH' region motif lies at 58–68 (PYANGRAHLGT). Glu561 provides a ligand contact to L-isoleucyl-5'-AMP. The short motif at 602–606 (KMSKS) is the 'KMSKS' region element. Residue Lys605 coordinates ATP. Zn(2+)-binding residues include Cys899, Cys902, Cys919, and Cys922.

It belongs to the class-I aminoacyl-tRNA synthetase family. IleS type 1 subfamily. Monomer. It depends on Zn(2+) as a cofactor.

Its subcellular location is the cytoplasm. It catalyses the reaction tRNA(Ile) + L-isoleucine + ATP = L-isoleucyl-tRNA(Ile) + AMP + diphosphate. In terms of biological role, catalyzes the attachment of isoleucine to tRNA(Ile). As IleRS can inadvertently accommodate and process structurally similar amino acids such as valine, to avoid such errors it has two additional distinct tRNA(Ile)-dependent editing activities. One activity is designated as 'pretransfer' editing and involves the hydrolysis of activated Val-AMP. The other activity is designated 'posttransfer' editing and involves deacylation of mischarged Val-tRNA(Ile). The polypeptide is Isoleucine--tRNA ligase (Coxiella burnetii (strain RSA 331 / Henzerling II)).